Consider the following 241-residue polypeptide: 2-C-methyl-D-erythritol 4-phosphate cytidylyltransferase (241 aa).

The protein belongs to the IspD/TarI cytidylyltransferase family. IspD subfamily. Homodimer.

The catalysed reaction is 2-C-methyl-D-erythritol 4-phosphate + CTP + H(+) = 4-CDP-2-C-methyl-D-erythritol + diphosphate. Its pathway is isoprenoid biosynthesis; isopentenyl diphosphate biosynthesis via DXP pathway; isopentenyl diphosphate from 1-deoxy-D-xylulose 5-phosphate: step 2/6. Catalyzes the formation of 4-diphosphocytidyl-2-C-methyl-D-erythritol from CTP and 2-C-methyl-D-erythritol 4-phosphate (MEP). This Yersinia pseudotuberculosis serotype IB (strain PB1/+) protein is 2-C-methyl-D-erythritol 4-phosphate cytidylyltransferase.